Reading from the N-terminus, the 163-residue chain is Pheromone-binding protein (163 aa).

Positions 1-22 are cleaved as a signal peptide; it reads MMSVRLMLVVAVWLCLRVDASQ. 3 cysteine pairs are disulfide-bonded: cysteine 39–cysteine 74, cysteine 70–cysteine 129, and cysteine 117–cysteine 138.

Belongs to the PBP/GOBP family. Antenna.

In terms of biological role, this major soluble protein in olfactory sensilla of male moths might serve to solubilize the extremely hydrophobic pheromone molecules and to transport pheromone through the aqueous lymph to receptors located on olfactory cilia. This Heliothis virescens (Tobacco budworm moth) protein is Pheromone-binding protein.